Consider the following 529-residue polypeptide: Bifunctional purine biosynthesis protein PurH (529 aa).

Residues 1-148 (MQQRRPVRRA…KNHKDVAIVV (148 aa)) enclose the MGS-like domain.

It belongs to the PurH family.

It catalyses the reaction (6R)-10-formyltetrahydrofolate + 5-amino-1-(5-phospho-beta-D-ribosyl)imidazole-4-carboxamide = 5-formamido-1-(5-phospho-D-ribosyl)imidazole-4-carboxamide + (6S)-5,6,7,8-tetrahydrofolate. The catalysed reaction is IMP + H2O = 5-formamido-1-(5-phospho-D-ribosyl)imidazole-4-carboxamide. The protein operates within purine metabolism; IMP biosynthesis via de novo pathway; 5-formamido-1-(5-phospho-D-ribosyl)imidazole-4-carboxamide from 5-amino-1-(5-phospho-D-ribosyl)imidazole-4-carboxamide (10-formyl THF route): step 1/1. It participates in purine metabolism; IMP biosynthesis via de novo pathway; IMP from 5-formamido-1-(5-phospho-D-ribosyl)imidazole-4-carboxamide: step 1/1. In Salmonella dublin (strain CT_02021853), this protein is Bifunctional purine biosynthesis protein PurH.